The sequence spans 556 residues: Formate--tetrahydrofolate ligase (556 aa).

Position 65–72 (65–72 (TPAGEGKS)) interacts with ATP.

This sequence belongs to the formate--tetrahydrofolate ligase family.

It catalyses the reaction (6S)-5,6,7,8-tetrahydrofolate + formate + ATP = (6R)-10-formyltetrahydrofolate + ADP + phosphate. The protein operates within one-carbon metabolism; tetrahydrofolate interconversion. The chain is Formate--tetrahydrofolate ligase from Streptococcus pneumoniae (strain 70585).